We begin with the raw amino-acid sequence, 1192 residues long: Protein argonaute 13 (1192 aa).

The region spanning 183-296 (TVIQFVEEFL…LPMEVCKIVE (114 aa)) is the PAZ domain. The Piwi domain maps to 472–770 (LLIVILLEVS…AASHAHCCIK (299 aa)).

This sequence belongs to the argonaute family. Ago subfamily.

Functionally, probably involved in the RNA silencing pathway. May bind to short RNAs such as microRNAs (miRNAs) or short interfering RNAs (siRNAs), and represses the translation of mRNAs which are complementary to them. This chain is Protein argonaute 13 (AGO13), found in Oryza sativa subsp. japonica (Rice).